The sequence spans 1279 residues: MALSRGTSLILHEDPEKIPSPNSCEVPGIMSNTTPRPTPDLALAPPPEHALALTPALHPALSPDPEGVSGPVSNDIPSHNASGATTPSSTQINTVDTADQGLNHTSGPDAAGTLCPDSQPARIPSSTQANVLSPENSSRPCSEDVSKSFSSKVFGLGQSNSNPSRPEPNLYIKALSREALVRSHNISRQGSQVPLLLPSNTSLDRLHSGNISKVNLGIAPNSNEAITLTSHTIFASISKEALSAPWNTGSKGSINGTSTIQPRSGLNVTVTHASHVSMIPGSSEGLSLQSSARVPNSTLSPSSCMTLIMDSESPSMDSSFLVTDTSTLTLSSHRDYSEDNSIRTMPLEENLGKWDSLQGVTALQSPPEGTSEDVKVNEAEKRNHDNKAALVANIITYQKNQEMVEMKEEKEATVKMMMRQIQEEPLDSLLSPARRQAMEILAQLSHTKPILSVRERVELVNTCVRSVFSLPSVQAMQEKDESKAEVIQILYYQTLDSLQKLLNALFIEDPTPTGLKSILEPLGPWMNSGKAHERARAVNSNVSVLNHTLVTLPFLISSGFPTLGLLLGRLLLRIGDPDEEIGREALDGITILYTILDLQKRTKNKEDTNKKELYENNKRFLGPYNPVSPCQNILRVIAEFGDFLGPQQVRDLLLAALEGLKGISETQGKDSGEMMQLASEVMLSSVLEWYRHRALEVIPEIMQGIYMQLTHIQEPRAREVALLPISFLASSFMTEVVVALLMCPLPLDSNGAEMWRQLILRKPSCDVRDLLDLLLTSLKEKPVTKKGRASIVPLAAASGLCELLSVNSCVGRVRRIYPQLLLALLIQVHYHIGLNLPSRMAPRKDSKDDTQPPLFIPVRWMVKVVKTLLLKMGCSYESAFLEEQGGWELMGQAESHYRGVSLLARAMVHYSCQELCRILYLLIPLLERGDERHKITATAFFVELFRMEQVRRIPEEYSLGRMVEGLSHRDPIMNVLSIRGLVILACKSEKMAKVQSLLPSMVKSLKNMDGMLVVEAVHDLKRIFKGQGKKLTDSAVYVEMLQILLPHFTDAREMVRASCINVYGKVVKKLQTPRTQAMEEQLTSTLMPLLFIIQEGNAKVSQKCVKTLVCCSSFMNWELPKKAYSQKPWDNQQLTVTKICKYLVSSHRDNVFTFLNQSLEYAKNSRASLRKSSVIFIGSLVPCMENMMTEERLNEVKATLEILRHDPEASVCICAAQAQDQIMATCWRNSWPLLYGDSWVCDPSSMHRWSPSCENLPTSHQRRSWIMQALASWKMSLKQ.

The tract at residues 1–145 is disordered; the sequence is MALSRGTSLI…NSSRPCSEDV (145 aa). Positions 39–61 are enriched in low complexity; sequence PDLALAPPPEHALALTPALHPAL. 2 stretches are compositionally biased toward polar residues: residues 71 to 106 and 124 to 140; these read PVSNDIPSHNASGATTPSSTQINTVDTADQGLNHTS and PSSTQANVLSPENSSRP. N-linked (GlcNAc...) asparagine glycans are attached at residues asparagine 200, asparagine 210, asparagine 255, asparagine 267, and asparagine 296. Residue serine 356 is modified to Phosphoserine. N-linked (GlcNAc...) asparagine glycosylation occurs at asparagine 541. The next 2 helical transmembrane spans lie at 548–568 and 722–742; these read TLVTLPFLISSGFPTLGLLLG and LLPISFLASSFMTEVVVALLM. 4 HEAT repeats span residues 913–950, 992–1029, 1035–1072, and 1080–1117; these read QELCRILYLLIPLLERGDERHKITATAFFVELFRMEQV, AKVQSLLPSMVKSLKNMDGMLVVEAVHDLKRIFKGQGK, AVYVEMLQILLPHFTDAREMVRASCINVYGKVVKKLQT, and EQLTSTLMPLLFIIQEGNAKVSQKCVKTLVCCSSFMNW.

It is found in the membrane. The protein is Maestro heat-like repeat-containing protein family member 7 (Mroh7) of Mus musculus (Mouse).